The sequence spans 438 residues: 3-phosphoshikimate 1-carboxyvinyltransferase (438 aa).

Residues lysine 26, serine 27, and arginine 31 each coordinate 3-phosphoshikimate. Lysine 26 contributes to the phosphoenolpyruvate binding site. Residues glycine 99 and arginine 127 each contribute to the phosphoenolpyruvate site. Serine 170, serine 171, glutamine 172, serine 199, glutamate 314, and histidine 343 together coordinate 3-phosphoshikimate. Residue glutamine 172 coordinates phosphoenolpyruvate. Residue glutamate 314 is the Proton acceptor of the active site. Phosphoenolpyruvate-binding residues include arginine 347, arginine 388, and lysine 413.

This sequence belongs to the EPSP synthase family. Monomer.

Its subcellular location is the cytoplasm. It catalyses the reaction 3-phosphoshikimate + phosphoenolpyruvate = 5-O-(1-carboxyvinyl)-3-phosphoshikimate + phosphate. The protein operates within metabolic intermediate biosynthesis; chorismate biosynthesis; chorismate from D-erythrose 4-phosphate and phosphoenolpyruvate: step 6/7. In terms of biological role, catalyzes the transfer of the enolpyruvyl moiety of phosphoenolpyruvate (PEP) to the 5-hydroxyl of shikimate-3-phosphate (S3P) to produce enolpyruvyl shikimate-3-phosphate and inorganic phosphate. The chain is 3-phosphoshikimate 1-carboxyvinyltransferase from Mycobacterium sp. (strain MCS).